Here is a 326-residue protein sequence, read N- to C-terminus: Dipeptide transport ATP-binding protein DppD (326 aa).

Residues I5–I255 form the ABC transporter domain. ATP-binding positions include A44–T49, N61, and Q97. 4 residues coordinate [4Fe-4S] cluster: C285, C291, C298, and C316.

The protein belongs to the ABC transporter superfamily.

The protein resides in the cell membrane. The enzyme catalyses a dipeptide(out) + ATP + H2O = a dipeptide(in) + ADP + phosphate + H(+). With respect to regulation, the C-terminal iron-sulfur cluster may stabilize the structure of the C-terminal loops and may function in the regulation of the transport process. Part of the ABC transporter Dpp involved in dipeptide transport. Responsible for energy coupling to the transport system. The sequence is that of Dipeptide transport ATP-binding protein DppD from Caldanaerobacter subterraneus subsp. tengcongensis (strain DSM 15242 / JCM 11007 / NBRC 100824 / MB4) (Thermoanaerobacter tengcongensis).